The following is a 312-amino-acid chain: R2-like ligand binding oxidase (312 aa).

Mn(2+) contacts are provided by glutamate 68, glutamate 101, and histidine 104. The 3-(O4'-tyrosyl)-valine (Val-Tyr) cross-link spans 71 to 162; it reads VTQDIQPFMA…AAQVRASATY (92 aa). Fe cation is bound at residue glutamate 101. Fe cation is bound by residues glutamate 167, glutamate 202, and histidine 205.

The protein belongs to the ribonucleoside diphosphate reductase small chain family. R2-like ligand binding oxidase subfamily. As to quaternary structure, homodimer. It depends on Fe cation as a cofactor. Requires Mn(2+) as cofactor.

Functionally, probable oxidase that might be involved in lipid metabolism. In Mycobacterium sp. (strain JLS), this protein is R2-like ligand binding oxidase.